The sequence spans 71 residues: Ranatuerin-2PLa (71 aa).

Positions 1 to 22 (MFTTKKSMLLFFFLGTISLSLC) are cleaved as a signal peptide. A propeptide spanning residues 23-41 (EQERGADEDDGVEMTEEEV) is cleaved from the precursor. The cysteines at positions 66 and 71 are disulfide-linked.

Expressed by the skin glands.

The protein resides in the secreted. In terms of biological role, may have antimicrobial activity against the Gram-negative bacterium E.coli. In Lithobates palustris (Pickerel frog), this protein is Ranatuerin-2PLa.